A 67-amino-acid polypeptide reads, in one-letter code: Large ribosomal subunit protein eL24 (67 aa).

Zn(2+) is bound by residues Cys-7, Cys-10, Cys-33, and Cys-37. The C4-type zinc finger occupies Cys-7–Cys-37.

Belongs to the eukaryotic ribosomal protein eL24 family. Part of the 50S ribosomal subunit. Forms a cluster with proteins L3 and L14. Zn(2+) serves as cofactor.

Functionally, binds to the 23S rRNA. This Pyrococcus abyssi (strain GE5 / Orsay) protein is Large ribosomal subunit protein eL24.